A 1058-amino-acid polypeptide reads, in one-letter code: MDEHGDHRQSNPFNDQQTSSGKILRIRLENFMCHSNLEIEFGDWVNFITGQNGSGKSAILTALCVAFGCRARGTQRAATLKDFIKTGCSYALVYVELKNQGEDAFKPEIYGDTLIIERRISDSTSLTVLKDHQGRKISSRKEELRELVEHYNIDVENPCVIMSQDKSREFLHSGNDKDKFKFFYKATLLQQVDDILQSIGTKLNSANALLDEMEKTIKPIEKEINELLEKIKNMEHVEEITQQVLHLKKKLAWSWVYDVDRQLKEQNEKIVKFKERVPTCQNKIDRKLGEVESLRVSLTEKKAQVACLIDESTAMKRELECLRQSMKKAAREKIALEEEYHHKCSNIQKIKDRVRRLERQIEDINEMTIRSTQVEQSEIEGKLNQLTVEVEKAESLVSSLKEEENMVMEKASAGGKEKEHIEEMIRDHEKKQRNMNAHINDLKKHQTNKVTAFGGDKVINLLRAIERHHRRFKMPPIGPIGAHVTLINGNRWASAVEQALGNLLNAFIVTDHKDLVALRDCGKEAKYNNLKIIIYDFSRPRLDIPRHMIPQTEHPTILSVLHSENTTVLNVLVDVSCVERHVLAENYEVGKIIAFERRLSHLKDVFTIDGYRMFSRGPVQTTLPPRPRRPTRLCASFDDQIKDLEIEASREQSEIQECRGQKREAEMNLEGLESTMRRLKKQRTQLEKDLTRKELEMQDLKNSVASETKASPTSSVNELHLEIMKFQKEIEEKESLLEKLQDSLKEAELKANELKASYENLYESAKGEIEALEKAEDELKEKEDELHSAETEKNHYEDIMKDKVLPEIKQAETIYKELEMKRQESNKKASIICPESEIKALGPWDGPTPLQLSAQINKINHRLKRENENYSESIDDLRIMHGEKEQKIGKKRKTYKSCREKLKVCKDAVDSRWNKLQRNKDLLKRELTWQFNHHLGKKGISGNIRVSYEDKTLSIEVKMPQDATNSAVRDTRGLSGGERSFSTLCFTLALQNMTEAPIRAMDEFDVFMDAVSRKISLDTLIDFALKQGSQWMFITPHDISMVKSHEKIKKQQMAAPRS.

The 1027-residue stretch at 23-1049 folds into the Zinc-hook domain; sequence ILRIRLENFM…SMVKSHEKIK (1027 aa). 50-57 provides a ligand contact to ATP; the sequence is GQNGSGKS. Residues 136–449 are a coiled coil; that stretch reads KISSRKEELR…NDLKKHQTNK (314 aa). The interval 450–633 is flexible hinge; that stretch reads VTAFGGDKVI…PPRPRRPTRL (184 aa). Residues 634 to 927 adopt a coiled-coil conformation; the sequence is CASFDDQIKD…RNKDLLKREL (294 aa).

The protein belongs to the SMC family. SMC6 subfamily. Forms a heterodimer with SMC5. The SMC5-SMC6 complex is composed of the SMC5 and SMC6 heterodimer attached via their hinge domain and from the non-SMC subunit NSE4A or NSE4B. As to expression, expressed in seedlings, rosette leaves and floral buds.

It localises to the nucleus. Its subcellular location is the chromosome. Core component of the SMC5-SMC6 complex that promotes sister chromatid alignment after DNA damage and facilitates double-stranded DNA breaks (DSBs) repair via homologous recombination between sister chromatids. The chain is Structural maintenance of chromosomes protein 6A (SMC6A) from Arabidopsis thaliana (Mouse-ear cress).